The chain runs to 282 residues: Elongation factor Ts (282 aa).

Residues Thr-80–Val-83 are involved in Mg(2+) ion dislocation from EF-Tu.

The protein belongs to the EF-Ts family.

Its subcellular location is the cytoplasm. In terms of biological role, associates with the EF-Tu.GDP complex and induces the exchange of GDP to GTP. It remains bound to the aminoacyl-tRNA.EF-Tu.GTP complex up to the GTP hydrolysis stage on the ribosome. The protein is Elongation factor Ts (tsf) of Chlamydia muridarum (strain MoPn / Nigg).